The primary structure comprises 163 residues: Putative 4-hydroxy-4-methyl-2-oxoglutarate aldolase (163 aa).

Substrate is bound by residues 75–78 and Arg-97; that span reads GDQL. Asp-98 is an a divalent metal cation binding site.

Belongs to the class II aldolase/RraA-like family. In terms of assembly, homotrimer. A divalent metal cation serves as cofactor.

It catalyses the reaction 4-hydroxy-4-methyl-2-oxoglutarate = 2 pyruvate. The catalysed reaction is oxaloacetate + H(+) = pyruvate + CO2. In terms of biological role, catalyzes the aldol cleavage of 4-hydroxy-4-methyl-2-oxoglutarate (HMG) into 2 molecules of pyruvate. Also contains a secondary oxaloacetate (OAA) decarboxylase activity due to the common pyruvate enolate transition state formed following C-C bond cleavage in the retro-aldol and decarboxylation reactions. This Photobacterium profundum (strain SS9) protein is Putative 4-hydroxy-4-methyl-2-oxoglutarate aldolase.